Consider the following 389-residue polypeptide: Flap endonuclease 1 (389 aa).

An N-domain region spans residues 1-105; the sequence is MGIKGLNKLL…GELAKRKERR (105 aa). Mg(2+) is bound at residue D34. Residues R47 and R71 each contribute to the DNA site. D87, E170, E172, D191, and D193 together coordinate Mg(2+). An I-domain region spans residues 134-265; the sequence is DVTRFEKRTV…QTALKLMKEH (132 aa). E170 is a DNA binding site. DNA contacts are provided by G243 and D245. D245 contacts Mg(2+). The interaction with PCNA stretch occupies residues 351-359; sequence PQARLDGFF. Residues 360–389 form a disordered region; the sequence is KVMPKEGGEKRKADDKKTKGKKPATKKAKK. Over residues 362 to 376 the composition is skewed to basic and acidic residues; it reads MPKEGGEKRKADDKK. A compositionally biased stretch (basic residues) spans 377-389; it reads TKGKKPATKKAKK.

The protein belongs to the XPG/RAD2 endonuclease family. FEN1 subfamily. Interacts with PCNA. Three molecules of FEN1 bind to one PCNA trimer with each molecule binding to one PCNA monomer. PCNA stimulates the nuclease activity without altering cleavage specificity. Requires Mg(2+) as cofactor. Phosphorylated. Phosphorylation upon DNA damage induces relocalization to the nuclear plasma.

The protein resides in the nucleus. It is found in the nucleolus. Its subcellular location is the nucleoplasm. It localises to the mitochondrion. In terms of biological role, structure-specific nuclease with 5'-flap endonuclease and 5'-3' exonuclease activities involved in DNA replication and repair. During DNA replication, cleaves the 5'-overhanging flap structure that is generated by displacement synthesis when DNA polymerase encounters the 5'-end of a downstream Okazaki fragment. It enters the flap from the 5'-end and then tracks to cleave the flap base, leaving a nick for ligation. Also involved in the long patch base excision repair (LP-BER) pathway, by cleaving within the apurinic/apyrimidinic (AP) site-terminated flap. Acts as a genome stabilization factor that prevents flaps from equilibrating into structures that lead to duplications and deletions. Also possesses 5'-3' exonuclease activity on nicked or gapped double-stranded DNA, and exhibits RNase H activity. Also involved in replication and repair of rDNA and in repairing mitochondrial DNA. In Yarrowia lipolytica (strain CLIB 122 / E 150) (Yeast), this protein is Flap endonuclease 1.